Consider the following 436-residue polypeptide: GTPase Obg (436 aa).

The region spanning 2-160 (SMFLDTAKIQ…RELLLELKVL (159 aa)) is the Obg domain. In terms of domain architecture, OBG-type G spans 161-338 (ADVGLVGFPS…LLDATAELLD (178 aa)). GTP contacts are provided by residues 167–174 (GFPSVGKS), 192–196 (FTTIV), 214–217 (DLPG), 284–287 (NKMD), and 319–321 (SSL). Mg(2+)-binding residues include Ser174 and Thr194. The OCT domain maps to 358-436 (GFDEEAPAFE…IGKFEFEFVD (79 aa)).

This sequence belongs to the TRAFAC class OBG-HflX-like GTPase superfamily. OBG GTPase family. As to quaternary structure, monomer. Mg(2+) serves as cofactor.

It is found in the cytoplasm. An essential GTPase which binds GTP, GDP and possibly (p)ppGpp with moderate affinity, with high nucleotide exchange rates and a fairly low GTP hydrolysis rate. Plays a role in control of the cell cycle, stress response, ribosome biogenesis and in those bacteria that undergo differentiation, in morphogenesis control. In Streptococcus gordonii (strain Challis / ATCC 35105 / BCRC 15272 / CH1 / DL1 / V288), this protein is GTPase Obg.